The following is a 686-amino-acid chain: Methionine--tRNA ligase (686 aa).

The 'HIGH' region signature appears at Pro15 to His25. Positions 146, 149, 159, and 162 each coordinate Zn(2+). The short motif at Lys332 to Ser336 is the 'KMSKS' region element. Residue Lys335 coordinates ATP. Residues Ala585–Met686 enclose the tRNA-binding domain.

This sequence belongs to the class-I aminoacyl-tRNA synthetase family. MetG type 1 subfamily. In terms of assembly, homodimer. Zn(2+) is required as a cofactor.

The protein resides in the cytoplasm. It catalyses the reaction tRNA(Met) + L-methionine + ATP = L-methionyl-tRNA(Met) + AMP + diphosphate. In terms of biological role, is required not only for elongation of protein synthesis but also for the initiation of all mRNA translation through initiator tRNA(fMet) aminoacylation. This is Methionine--tRNA ligase from Aliivibrio salmonicida (strain LFI1238) (Vibrio salmonicida (strain LFI1238)).